The chain runs to 86 residues: Small ribosomal subunit protein bS20 (86 aa).

This sequence belongs to the bacterial ribosomal protein bS20 family.

Binds directly to 16S ribosomal RNA. In Kocuria rhizophila (strain ATCC 9341 / DSM 348 / NBRC 103217 / DC2201), this protein is Small ribosomal subunit protein bS20.